The following is a 490-amino-acid chain: Betaine aldehyde dehydrogenase (490 aa).

K(+)-binding residues include threonine 26, isoleucine 27, and aspartate 93. 150 to 152 (GAW) provides a ligand contact to NAD(+). Lysine 162 functions as the Charge relay system in the catalytic mechanism. 176–179 (KPSE) is an NAD(+) binding site. Valine 180 lines the K(+) pocket. Residue 230 to 233 (GVAS) participates in NAD(+) binding. K(+) is bound at residue leucine 246. Catalysis depends on glutamate 252, which acts as the Proton acceptor. Positions 254, 286, and 387 each coordinate NAD(+). Cysteine 286 functions as the Nucleophile in the catalytic mechanism. The residue at position 286 (cysteine 286) is a Cysteine sulfenic acid (-SOH). Residues lysine 457 and glycine 460 each coordinate K(+). Catalysis depends on glutamate 464, which acts as the Charge relay system.

Belongs to the aldehyde dehydrogenase family. In terms of assembly, dimer of dimers. K(+) is required as a cofactor.

It catalyses the reaction betaine aldehyde + NAD(+) + H2O = glycine betaine + NADH + 2 H(+). The protein operates within amine and polyamine biosynthesis; betaine biosynthesis via choline pathway; betaine from betaine aldehyde: step 1/1. Functionally, involved in the biosynthesis of the osmoprotectant glycine betaine. Catalyzes the irreversible oxidation of betaine aldehyde to the corresponding acid. The protein is Betaine aldehyde dehydrogenase of Escherichia coli (strain 55989 / EAEC).